The following is a 425-amino-acid chain: Homogentisate 1,2-dioxygenase (425 aa).

H283 acts as the Proton acceptor in catalysis. H326 and E332 together coordinate Fe cation. Residues Y341 and H362 each contribute to the homogentisate site. Fe cation is bound at residue H362.

This sequence belongs to the homogentisate dioxygenase family. In terms of assembly, hexamer; dimer of trimers. The cofactor is Fe cation.

It carries out the reaction homogentisate + O2 = 4-maleylacetoacetate + H(+). It functions in the pathway amino-acid degradation; L-phenylalanine degradation; acetoacetate and fumarate from L-phenylalanine: step 4/6. Its function is as follows. Involved in the catabolism of homogentisate (2,5-dihydroxyphenylacetate or 2,5-OH-PhAc), a central intermediate in the degradation of phenylalanine and tyrosine. Catalyzes the oxidative ring cleavage of the aromatic ring of homogentisate to yield maleylacetoacetate. The chain is Homogentisate 1,2-dioxygenase from Caulobacter vibrioides (strain ATCC 19089 / CIP 103742 / CB 15) (Caulobacter crescentus).